Consider the following 224-residue polypeptide: Ribonuclease T (224 aa).

The Exonuclease domain maps to 32-206 (VVVDVETGGF…YDTEKTAELF (175 aa)). Positions 35, 37, 193, and 198 each coordinate Mg(2+). His-193 functions as the Proton donor/acceptor in the catalytic mechanism.

The protein belongs to the RNase T family. As to quaternary structure, homodimer. The cofactor is Mg(2+).

Trims short 3' overhangs of a variety of RNA species, leaving a one or two nucleotide 3' overhang. Responsible for the end-turnover of tRNA: specifically removes the terminal AMP residue from uncharged tRNA (tRNA-C-C-A). Also appears to be involved in tRNA biosynthesis. The protein is Ribonuclease T of Pseudomonas aeruginosa (strain UCBPP-PA14).